A 399-amino-acid polypeptide reads, in one-letter code: Argininosuccinate synthase (399 aa).

Residue 9–17 participates in ATP binding; sequence AYSGGLDTS. Tyr-85 provides a ligand contact to L-citrulline. Position 115 (Gly-115) interacts with ATP. L-aspartate is bound by residues Thr-117, Asn-121, and Asp-122. Asn-121 lines the L-citrulline pocket. L-citrulline contacts are provided by Arg-125, Ser-173, Glu-258, and Tyr-270.

It belongs to the argininosuccinate synthase family. Type 1 subfamily. As to quaternary structure, homotetramer.

It localises to the cytoplasm. It catalyses the reaction L-citrulline + L-aspartate + ATP = 2-(N(omega)-L-arginino)succinate + AMP + diphosphate + H(+). It functions in the pathway amino-acid biosynthesis; L-arginine biosynthesis; L-arginine from L-ornithine and carbamoyl phosphate: step 2/3. This is Argininosuccinate synthase from Streptococcus gordonii (strain Challis / ATCC 35105 / BCRC 15272 / CH1 / DL1 / V288).